Reading from the N-terminus, the 509-residue chain is Heat shock 70 kDa protein 14 (509 aa).

Belongs to the heat shock protein 70 family. Component of ribosome-associated complex (RAC), a heterodimer composed of Hsp70/DnaK-type chaperone HSPA14 and Hsp40/DnaJ-type chaperone DNAJC2.

It is found in the cytoplasm. The protein resides in the cytosol. Functionally, component of the ribosome-associated complex (RAC), a complex involved in folding or maintaining nascent polypeptides in a folding-competent state. In the RAC complex, binds to the nascent polypeptide chain, while DNAJC2 stimulates its ATPase activity. In Macaca fascicularis (Crab-eating macaque), this protein is Heat shock 70 kDa protein 14 (HSPA14).